Here is a 295-residue protein sequence, read N- to C-terminus: UDP-N-acetylenolpyruvoylglucosamine reductase (295 aa).

In terms of domain architecture, FAD-binding PCMH-type spans 23 to 188 (KVGGPADFLA…ISAKFALKPG (166 aa)). Arg-167 is an active-site residue. Ser-217 (proton donor) is an active-site residue. Glu-287 is a catalytic residue.

This sequence belongs to the MurB family. Requires FAD as cofactor.

It localises to the cytoplasm. The enzyme catalyses UDP-N-acetyl-alpha-D-muramate + NADP(+) = UDP-N-acetyl-3-O-(1-carboxyvinyl)-alpha-D-glucosamine + NADPH + H(+). It participates in cell wall biogenesis; peptidoglycan biosynthesis. In terms of biological role, cell wall formation. The polypeptide is UDP-N-acetylenolpyruvoylglucosamine reductase (Streptococcus pyogenes serotype M18 (strain MGAS8232)).